The chain runs to 116 residues: Spexin (116 aa).

The signal sequence occupies residues 1 to 26; sequence MKGLRSLAATTLALFLVFVFLGNSSC. Positions 27–35 are excised as a propeptide; that stretch reads APQRLLERR. At Gln-49 the chain carries Glutamine amide. 2 consecutive propeptides follow at residues 50-116 and 74-116; these read GRRF…LLNW and PNPQ…LLNW. Residues 55-73 are compositionally biased toward basic and acidic residues; it reads SDQSRRKDLSDRPLPERRS. Residues 55–77 are disordered; that stretch reads SDQSRRKDLSDRPLPERRSPNPQ.

The protein belongs to the spexin family. In terms of tissue distribution, expressed in the type I glomic cells within the carotid body (at protein level). Expressed predominantly in pancreas, testis, kidney, brain and placenta. Expressed in submucosal layer of esophagus and stomach fundus.

The protein localises to the secreted. The protein resides in the extracellular space. It localises to the cytoplasmic vesicle. It is found in the secretory vesicle. In terms of biological role, plays a role as a central modulator of cardiovascular and renal function and nociception. Also plays a role in energy metabolism and storage. Inhibits adrenocortical cell proliferation with minor stimulation on corticosteroid release. Functionally, acts as a ligand for galanin receptors GALR2 and GALR3. Intracerebroventricular administration of the peptide induces an increase in arterial blood pressure, a decrease in both heart rate and renal excretion and delayed natriuresis. Intraventricular administration of the peptide induces antinociceptive activity. Also induces contraction of muscarinic-like stomach smooth muscles. Intraperitoneal administration of the peptide induces a reduction in food consumption and body weight. Inhibits long chain fatty acid uptake into adipocytes. Intracerebroventricular administration of the peptide induces a decrease in heart rate, but no change in arterial pressure, and an increase in urine flow rate. Intraventricular administration of the peptide induces antinociceptive activity. The polypeptide is Spexin (SPX) (Homo sapiens (Human)).